Reading from the N-terminus, the 141-residue chain is Cystatin-S (141 aa).

A signal peptide spans 1 to 20 (MARPLCTLLLLMATLAGALA). Residues S21 and S23 each carry the phosphoserine modification. A Secondary area of contact motif is present at residues 76–80 (QTFGG). 2 disulfide bridges follow: C94/C104 and C118/C138.

Belongs to the cystatin family. Post-translationally, phosphorylated at both its N- and C-terminal regions. As to expression, expressed in submandibular and sublingual saliva but not in parotid saliva (at protein level). Expressed in saliva, tears, urine and seminal fluid.

Its subcellular location is the secreted. Its function is as follows. This protein strongly inhibits papain and ficin, partially inhibits stem bromelain and bovine cathepsin C, but does not inhibit porcine cathepsin B or clostripain. Papain is inhibited non-competitively. This Homo sapiens (Human) protein is Cystatin-S (CST4).